Reading from the N-terminus, the 180-residue chain is ATP-dependent protease subunit HslV (180 aa).

Thr-7 is an active-site residue. Positions 162, 165, and 168 each coordinate Na(+).

The protein belongs to the peptidase T1B family. HslV subfamily. In terms of assembly, a double ring-shaped homohexamer of HslV is capped on each side by a ring-shaped HslU homohexamer. The assembly of the HslU/HslV complex is dependent on binding of ATP.

The protein resides in the cytoplasm. The enzyme catalyses ATP-dependent cleavage of peptide bonds with broad specificity.. Its activity is regulated as follows. Allosterically activated by HslU binding. Its function is as follows. Protease subunit of a proteasome-like degradation complex believed to be a general protein degrading machinery. This Dichelobacter nodosus (strain VCS1703A) protein is ATP-dependent protease subunit HslV.